A 119-amino-acid chain; its full sequence is Large ribosomal subunit protein uL22 (119 aa).

It belongs to the universal ribosomal protein uL22 family. As to quaternary structure, part of the 50S ribosomal subunit.

In terms of biological role, this protein binds specifically to 23S rRNA; its binding is stimulated by other ribosomal proteins, e.g. L4, L17, and L20. It is important during the early stages of 50S assembly. It makes multiple contacts with different domains of the 23S rRNA in the assembled 50S subunit and ribosome. Functionally, the globular domain of the protein is located near the polypeptide exit tunnel on the outside of the subunit, while an extended beta-hairpin is found that lines the wall of the exit tunnel in the center of the 70S ribosome. The protein is Large ribosomal subunit protein uL22 of Rickettsia akari (strain Hartford).